A 314-amino-acid polypeptide reads, in one-letter code: Tudor-interacting repair regulator protein (314 aa).

Gly-2 carries N-myristoyl glycine lipidation.

The protein belongs to the Nudix hydrolase family. TIRR subfamily. As to quaternary structure, interacts (via the cytoplasmic part) with syndecan-4 (SDC4), but not with other syndecan proteins. In terms of processing, myristoylated in vitro; additional evidence is however required to confirm myristoylation in vivo. In terms of tissue distribution, ubiquitously expressed. Expressed in embryonic brain, eyes, gizzard, heart, intestine, kidney, liver, tibia and skin.

Its subcellular location is the nucleus. It is found in the cytoplasm. The protein localises to the cytoskeleton. The protein resides in the cell membrane. It localises to the cell junction. Its subcellular location is the focal adhesion. Its function is as follows. Key regulator of TP53BP1 required to stabilize TP53BP1 and regulate its recruitment to chromatin. In Gallus gallus (Chicken), this protein is Tudor-interacting repair regulator protein (NUDT16L1).